The following is a 176-amino-acid chain: Nucleoside triphosphate/diphosphate phosphatase (176 aa).

Catalysis depends on Arg23, which acts as the Proton donor. Mg(2+)-binding residues include Asn87, Asp103, Asp105, Asp107, Asp120, and Glu123.

Belongs to the Ntdp family. Requires Mg(2+) as cofactor.

The catalysed reaction is a ribonucleoside 5'-triphosphate + H2O = a ribonucleoside 5'-diphosphate + phosphate + H(+). It carries out the reaction a ribonucleoside 5'-diphosphate + H2O = a ribonucleoside 5'-phosphate + phosphate + H(+). Has nucleoside phosphatase activity towards nucleoside triphosphates and nucleoside diphosphates. The polypeptide is Nucleoside triphosphate/diphosphate phosphatase (Bacillus velezensis (strain DSM 23117 / BGSC 10A6 / LMG 26770 / FZB42) (Bacillus amyloliquefaciens subsp. plantarum)).